Here is a 143-residue protein sequence, read N- to C-terminus: MSVIPPKFFKIANISIGCIDIIAALSQLTYIFTNLNVFLLAVYGLALSVPIVYLEFKVPSNLYRYASFYFSFLGRGLSYILLSLIISFGGIYNILAGMFTFILGVAFIVFHFSQFVEEPANFRAPGSSLSIGDDDIDDDDDMI.

Over 1-10 (MSVIPPKFFK) the chain is Cytoplasmic. A helical transmembrane segment spans residues 11–31 (IANISIGCIDIIAALSQLTYI). Topologically, residues 32–35 (FTNL) are lumenal. The chain crosses the membrane as a helical span at residues 36 to 56 (NVFLLAVYGLALSVPIVYLEF). At 57 to 67 (KVPSNLYRYAS) the chain is on the cytoplasmic side. The chain crosses the membrane as a helical span at residues 68 to 88 (FYFSFLGRGLSYILLSLIISF). Residue Gly89 is a topological domain, lumenal. Residues 90–110 (GIYNILAGMFTFILGVAFIVF) form a helical membrane-spanning segment. Topologically, residues 111-143 (HFSQFVEEPANFRAPGSSLSIGDDDIDDDDDMI) are cytoplasmic.

The protein belongs to the TVP15 family. Interacts with TVP18.

Its subcellular location is the golgi apparatus membrane. Functionally, golgi membrane protein involved in vesicular trafficking. In Saccharomyces cerevisiae (strain ATCC 204508 / S288c) (Baker's yeast), this protein is Golgi apparatus membrane protein TVP15 (TVP15).